A 471-amino-acid polypeptide reads, in one-letter code: Glutamate--tRNA ligase (471 aa).

The 'HIGH' region motif lies at 9–19 (PSPTGYLHVGG). Residues Cys98, Cys100, Cys125, and His127 each contribute to the Zn(2+) site. The short motif at 237–241 (KLSKR) is the 'KMSKS' region element. Residue Lys240 coordinates ATP.

Belongs to the class-I aminoacyl-tRNA synthetase family. Glutamate--tRNA ligase type 1 subfamily. In terms of assembly, monomer. It depends on Zn(2+) as a cofactor.

Its subcellular location is the cytoplasm. The enzyme catalyses tRNA(Glu) + L-glutamate + ATP = L-glutamyl-tRNA(Glu) + AMP + diphosphate. Functionally, catalyzes the attachment of glutamate to tRNA(Glu) in a two-step reaction: glutamate is first activated by ATP to form Glu-AMP and then transferred to the acceptor end of tRNA(Glu). The chain is Glutamate--tRNA ligase from Salmonella choleraesuis (strain SC-B67).